The sequence spans 918 residues: Dual serine/threonine and tyrosine protein kinase (918 aa).

The span at 1–19 (MQKDGTRSSRRMEEGDRRN) shows a compositional bias: basic and acidic residues. Residues 1–29 (MQKDGTRSSRRMEEGDRRNGSTGSSGSVS) are disordered. The Protein kinase domain maps to 643–897 (PRIGRELGRG…PLMGIVQPML (255 aa)). ATP-binding positions include 649-657 (LGRGQYGVV) and Lys672. The active-site Proton acceptor is Asp768.

The protein belongs to the protein kinase superfamily. Ser/Thr protein kinase family.

It is found in the cytoplasm. The protein localises to the cell membrane. Its subcellular location is the apical cell membrane. The protein resides in the basolateral cell membrane. It localises to the cell junction. It catalyses the reaction L-seryl-[protein] + ATP = O-phospho-L-seryl-[protein] + ADP + H(+). It carries out the reaction L-threonyl-[protein] + ATP = O-phospho-L-threonyl-[protein] + ADP + H(+). The enzyme catalyses L-tyrosyl-[protein] + ATP = O-phospho-L-tyrosyl-[protein] + ADP + H(+). In terms of biological role, may act as a positive regulator of ERK phosphorylation downstream of fibroblast growth factor-receptor activation. May induce both caspase-dependent apoptosis and caspase-independent cell death. May play a role in the embryonic development. The sequence is that of Dual serine/threonine and tyrosine protein kinase (dstyk) from Xenopus tropicalis (Western clawed frog).